We begin with the raw amino-acid sequence, 150 residues long: UPF0756 membrane protein NT05HA_0561 (150 aa).

4 helical membrane passes run 1 to 21, 52 to 72, 81 to 101, and 128 to 148; these read MSLQ…LGIF, YGLS…LVSG, AFVS…AWLA, and FLGG…VLIG.

This sequence belongs to the UPF0756 family.

It localises to the cell membrane. In Aggregatibacter aphrophilus (strain NJ8700) (Haemophilus aphrophilus), this protein is UPF0756 membrane protein NT05HA_0561.